The sequence spans 300 residues: Haloalkane dehalogenase (300 aa).

The 124-residue stretch at 32–155 (AIVFQHGNPT…PAVRGVFQGF (124 aa)) folds into the AB hydrolase-1 domain. Aspartate 109 functions as the Nucleophile in the catalytic mechanism. The active-site Proton donor is glutamate 133. Histidine 273 functions as the Proton acceptor in the catalytic mechanism.

This sequence belongs to the haloalkane dehalogenase family. Type 2 subfamily. As to quaternary structure, monomer.

It carries out the reaction 1-haloalkane + H2O = a halide anion + a primary alcohol + H(+). Catalyzes hydrolytic cleavage of carbon-halogen bonds in halogenated aliphatic compounds, leading to the formation of the corresponding primary alcohols, halide ions and protons. This Mycobacterium bovis (strain BCG / Pasteur 1173P2) protein is Haloalkane dehalogenase.